A 139-amino-acid chain; its full sequence is Ribonuclease P protein component (139 aa).

It belongs to the RnpA family. As to quaternary structure, consists of a catalytic RNA component (M1 or rnpB) and a protein subunit.

The catalysed reaction is Endonucleolytic cleavage of RNA, removing 5'-extranucleotides from tRNA precursor.. In terms of biological role, RNaseP catalyzes the removal of the 5'-leader sequence from pre-tRNA to produce the mature 5'-terminus. It can also cleave other RNA substrates such as 4.5S RNA. The protein component plays an auxiliary but essential role in vivo by binding to the 5'-leader sequence and broadening the substrate specificity of the ribozyme. In Chlamydia felis (strain Fe/C-56) (Chlamydophila felis), this protein is Ribonuclease P protein component.